Consider the following 1257-residue polypeptide: Protein flightless-1 homolog (1257 aa).

LRR repeat units follow at residues 6–31 (LQFVKGIDFSGNDFSGDRFPHDVEQM), 32–54 (TQMTWLKLNDSKLEQVPDELSRC), 56–77 (NLEHLQMAHNQLISVHGELSDL), 78–102 (PRLRSVIVRDNNLKTAGIPTDIFRM), 103–126 (KDLTIIDLSRNQLREVPTNLEYAK), 128–148 (SIVLNLSYNNIETIPNSVCAN), 149–172 (LIDLLFLDLSNNKLDMLPPQIRRL), 174–195 (MLQSLKLSNNPLNHFQLKQLPS), 197–221 (TSLSVLHMSNTNRTLDNIPPTLDDM), 222–244 (HNLRDVDFSENNLPIVPEALFKL), 246–267 (NLRKLNLSGNKIEKLNMTEGEW), 268–290 (ENLETLNMSHNQLTVLPDCVVKL), 292–315 (RLTKLYAANNQLTFEGIPSGIGKL), 316–338 (IQLTVLHLSYNKLELVPEGISRC), 339–361 (VKLQKLKLDHNRLITLPEGIHLL), and 363–384 (DLKVLDLHENENLVMPPKPNDA). 4 Gelsolin-like repeats span residues 523–600 (MDEA…EEFL), 640–714 (AVEM…PEFW), 759–832 (ELPK…MMFR), and 1168–1243 (EKTV…CRFR).

The protein belongs to the villin/gelsolin family.

May play a key role in embryonic cellularization by interacting with both the cytoskeleton and other cellular components. The chain is Protein flightless-1 homolog (fli-1) from Caenorhabditis elegans.